Reading from the N-terminus, the 189-residue chain is Tumor protein p53-inducible protein 11 (189 aa).

Residues 1-63 lie on the Cytoplasmic side of the membrane; sequence MAAKQPPPLM…FAVREPLGLR (63 aa). Ser-14 bears the Phosphoserine mark. A helical membrane pass occupies residues 64–84; the sequence is VWQFVSAVLFSGIAIMALAFP. The Extracellular portion of the chain corresponds to 85-108; that stretch reads DQLYDAVFDGAQVTSKTPIRLYGG. A helical membrane pass occupies residues 109–129; that stretch reads ALLSISLIMWNALYTAEKVII. Position 130 (Arg-130) is a topological domain, cytoplasmic. A helical transmembrane segment spans residues 131-151; it reads WTLLTEACYFSVQFLVVTATL. Residues 152–159 are Extracellular-facing; the sequence is AETGLASQ. The helical transmembrane segment at 160–180 threads the bilayer; the sequence is GILLLLASRLLFVAISVYYYY. At 181-189 the chain is on the cytoplasmic side; sequence QVGRKPKKV.

Its subcellular location is the membrane. The chain is Tumor protein p53-inducible protein 11 (TP53I11) from Bos taurus (Bovine).